The following is a 426-amino-acid chain: Serine--tRNA ligase (426 aa).

230 to 232 serves as a coordination point for L-serine; that stretch reads TAE. 261-263 provides a ligand contact to ATP; it reads RSE. E284 provides a ligand contact to L-serine. 348 to 351 lines the ATP pocket; that stretch reads EISS. Position 384 (S384) interacts with L-serine.

Belongs to the class-II aminoacyl-tRNA synthetase family. Type-1 seryl-tRNA synthetase subfamily. In terms of assembly, homodimer. The tRNA molecule binds across the dimer.

The protein resides in the cytoplasm. It carries out the reaction tRNA(Ser) + L-serine + ATP = L-seryl-tRNA(Ser) + AMP + diphosphate + H(+). The catalysed reaction is tRNA(Sec) + L-serine + ATP = L-seryl-tRNA(Sec) + AMP + diphosphate + H(+). Its pathway is aminoacyl-tRNA biosynthesis; selenocysteinyl-tRNA(Sec) biosynthesis; L-seryl-tRNA(Sec) from L-serine and tRNA(Sec): step 1/1. In terms of biological role, catalyzes the attachment of serine to tRNA(Ser). Is also able to aminoacylate tRNA(Sec) with serine, to form the misacylated tRNA L-seryl-tRNA(Sec), which will be further converted into selenocysteinyl-tRNA(Sec). This chain is Serine--tRNA ligase, found in Novosphingobium aromaticivorans (strain ATCC 700278 / DSM 12444 / CCUG 56034 / CIP 105152 / NBRC 16084 / F199).